We begin with the raw amino-acid sequence, 455 residues long: MIASTAKPHVILAAVPIYGHVEKLRIIGCDLQKRGYAVTFLTGTVWREFVEHAGLPFFALKANADFDGRDFAKAFPMWDKLPPGPPRFGYLRHSLIDQMPAQHESVQAVLEDVAARGLKAVVIQDTAFFGVNPIQMGAPGITPAGTITVGITPLPLFSIDTAPFGSGLPPDSSPEGRARNIAANEKIKAVAQISQAHFTQTMKSLGVKTVPDDLLNSAVTTPDRFLQLCIESFEYPRSDAPSNLRYIGALAPGDENKSQHPLPDWWDLVIKHDKPLVVVSQGTLSNHNYKDLIIPTLEALKDLDIRVVTTLVRTDSLDGDLQDFQIPSNVLVAKFIPFEELFKHADLVVNNGGYGTVQTAFGHGVPMVLAGQTEDKTETNARAAWSGAAINLACQTATAEQVRDAVEKVLNDPKYKNRAMELKKEYEACDALQSIADNIDELAAAAAAEEEDENE.

Belongs to the UDP-glycosyltransferase family.

It carries out the reaction exophillate + UDP-alpha-D-galactose = phaeomoniecin D + UDP + H(+). It functions in the pathway secondary metabolite biosynthesis. In terms of biological role, catalyzes the second glycosylation step during phaeomoniecin D biosynthesis, the further O-galactosylation of exophillic acid (produced by the O-glycosyltransferase OGT1) to yield the 4-O-beta-D-galactoside phaeomoniecin D. This is UDP-glycosyltransferase 2 from Phaeomoniella chlamydospora (Phaeoacremonium chlamydosporum).